Reading from the N-terminus, the 494-residue chain is Neuronal acetylcholine receptor subunit alpha-6 (494 aa).

Positions 1–31 (MHPKRRLCWCLPASGAWAFMLTSLIADTTAC) are cleaved as a signal peptide. At 32-240 (ESEERLFHKL…TYSFYIRRLP (209 aa)) the chain is on the extracellular side. Residues Asn-54 and Asn-171 are each glycosylated (N-linked (GlcNAc...) asparagine). A disulfide bridge links Cys-158 with Cys-172. Transmembrane regions (helical) follow at residues 241-265 (MFYT…FYLP), 272-290 (VTLC…LVIT), and 306-327 (YLLF…VLNI). Residues 328 to 468 (HYRTPTTHTM…WKYVAMVIDR (141 aa)) are Cytoplasmic-facing. The interval 364-390 (KNISKKTKKGSAKTSGKSKHSKHKDNK) is disordered. Basic residues predominate over residues 366–390 (ISKKTKKGSAKTSGKSKHSKHKDNK). A helical transmembrane segment spans residues 469 to 489 (VFLWVFIILCVFGTAGLFIQP).

The protein belongs to the ligand-gated ion channel (TC 1.A.9) family. Acetylcholine receptor (TC 1.A.9.1) subfamily. Alpha-6/CHRNA6 sub-subfamily. As to quaternary structure, neuronal AChR is composed of two different types of subunits: alpha and non-alpha (beta). CHRNA6/alpha-6 subunit can be combined to CHRNB2/beta-2, CHRNA4/alpha-4 and CHRNB3/beta-3 to give rise to functional receptors. Heteropentamers containing CHRNB3 have an stoichiometry of (CHRNA6:CHRNB2)2:CHRNB3. Interacts with LYPD6.

It localises to the synaptic cell membrane. It catalyses the reaction K(+)(in) = K(+)(out). The enzyme catalyses Na(+)(in) = Na(+)(out). The catalysed reaction is Ca(2+)(in) = Ca(2+)(out). Its activity is regulated as follows. Activated by a myriad of ligands such as acetylcholine, cytisine and nicotine. CHRNA6 nAChR activity is inhibited by the antagonists alpha-conotoxin MII and PIA, a small disulfide-constrained peptides from cone snails. Component of neuronal acetylcholine receptors (nAChRs) that function as pentameric, ligand-gated cation channels with high calcium permeability among other activities. nAChRs are excitatory neurotrasnmitter receptors formed by a collection of nAChR subunits known to mediate synaptic transmission in the nervous system and the neuromuscular junction. Each nAchR subunit confers differential attributes to channel properties, including activation, deactivation and desensitization kinetics, pH sensitivity, cation permeability, and binding to allosteric modulators. CHRNA6 forms pentameric channels with CHRNB2 and CHRNA4 that exhibit high sensitivity to ACh and nicotine and are predominantly expressed in only a few brain areas, including dopaminergic neurons, norepirephrine neurons and cells of the visual system. nAChrs containing CHRNA6 subunits mediate endogenous cholinergic modulation of dopamine and gamma-aminobutyric acid (GABA) release in response to nicotine at nerve terminals. In terms of biological role, component of neuronal acetylcholine receptors (nAChRs) that function as pentameric, ligand-gated cation channels with high calcium permeability among other activities. nAChRs are excitatory neurotrasnmitter receptors formed by a collection of nAChR subunits known to mediate synaptic transmission in the nervous system and the neuromuscular junction. Each nAchR subunit confers differential attributes to channel properties, including activation, deactivation and desensitization kinetics, pH sensitivity, cation permeability, and binding to allosteric modulators. CHRNA6 forms pentameric channels with CHRNB2, CHRNB3 and CHRNA4 that exhibit high sensitivity to ACh and nicotine and are predominantly expressed in only a few brain areas, including dopaminergic neurons, norepirephrine neurons and cells of the visual system. nAChrs containing CHRNA6 subunits mediate endogenous cholinergic modulation of dopamine and gamma-aminobutyric acid (GABA) release in response to nicotine at nerve terminals. The chain is Neuronal acetylcholine receptor subunit alpha-6 (CHRNA6) from Gallus gallus (Chicken).